Reading from the N-terminus, the 460-residue chain is L-seryl-tRNA(Sec) selenium transferase (460 aa).

Residue K293 is modified to N6-(pyridoxal phosphate)lysine.

It belongs to the SelA family. Requires pyridoxal 5'-phosphate as cofactor.

The protein localises to the cytoplasm. It carries out the reaction L-seryl-tRNA(Sec) + selenophosphate + H(+) = L-selenocysteinyl-tRNA(Sec) + phosphate. It functions in the pathway aminoacyl-tRNA biosynthesis; selenocysteinyl-tRNA(Sec) biosynthesis; selenocysteinyl-tRNA(Sec) from L-seryl-tRNA(Sec) (bacterial route): step 1/1. Converts seryl-tRNA(Sec) to selenocysteinyl-tRNA(Sec) required for selenoprotein biosynthesis. This chain is L-seryl-tRNA(Sec) selenium transferase, found in Haemophilus ducreyi (strain 35000HP / ATCC 700724).